A 159-amino-acid polypeptide reads, in one-letter code: Cyclic pyranopterin monophosphate synthase (159 aa).

Residues 75–77 (LCH) and 113–114 (ME) each bind substrate. Residue Asp128 is part of the active site.

The protein belongs to the MoaC family. Homohexamer; trimer of dimers.

It carries out the reaction (8S)-3',8-cyclo-7,8-dihydroguanosine 5'-triphosphate = cyclic pyranopterin phosphate + diphosphate. It functions in the pathway cofactor biosynthesis; molybdopterin biosynthesis. Functionally, catalyzes the conversion of (8S)-3',8-cyclo-7,8-dihydroguanosine 5'-triphosphate to cyclic pyranopterin monophosphate (cPMP). The polypeptide is Cyclic pyranopterin monophosphate synthase (Heliobacterium modesticaldum (strain ATCC 51547 / Ice1)).